We begin with the raw amino-acid sequence, 344 residues long: Phosphoribosylformylglycinamidine cyclo-ligase (344 aa).

This sequence belongs to the AIR synthase family.

Its subcellular location is the cytoplasm. It carries out the reaction 2-formamido-N(1)-(5-O-phospho-beta-D-ribosyl)acetamidine + ATP = 5-amino-1-(5-phospho-beta-D-ribosyl)imidazole + ADP + phosphate + H(+). It functions in the pathway purine metabolism; IMP biosynthesis via de novo pathway; 5-amino-1-(5-phospho-D-ribosyl)imidazole from N(2)-formyl-N(1)-(5-phospho-D-ribosyl)glycinamide: step 2/2. The sequence is that of Phosphoribosylformylglycinamidine cyclo-ligase from Bifidobacterium animalis subsp. lactis (strain AD011).